Consider the following 412-residue polypeptide: Serine hydroxymethyltransferase (412 aa).

(6S)-5,6,7,8-tetrahydrofolate-binding positions include Leu-117 and 121–123; that span reads GHL. Residue Lys-226 is modified to N6-(pyridoxal phosphate)lysine. (6S)-5,6,7,8-tetrahydrofolate is bound by residues Glu-242 and 350-352; that span reads SPF.

Belongs to the SHMT family. As to quaternary structure, homodimer. Pyridoxal 5'-phosphate is required as a cofactor.

Its subcellular location is the cytoplasm. The catalysed reaction is (6R)-5,10-methylene-5,6,7,8-tetrahydrofolate + glycine + H2O = (6S)-5,6,7,8-tetrahydrofolate + L-serine. It functions in the pathway one-carbon metabolism; tetrahydrofolate interconversion. It participates in amino-acid biosynthesis; glycine biosynthesis; glycine from L-serine: step 1/1. In terms of biological role, catalyzes the reversible interconversion of serine and glycine with tetrahydrofolate (THF) serving as the one-carbon carrier. Also exhibits THF-independent aldolase activity toward beta-hydroxyamino acids, producing glycine and aldehydes, via a retro-aldol mechanism. This chain is Serine hydroxymethyltransferase, found in Methanosarcina mazei (strain ATCC BAA-159 / DSM 3647 / Goe1 / Go1 / JCM 11833 / OCM 88) (Methanosarcina frisia).